The primary structure comprises 32 residues: Glutathione S-transferase 8.2 (32 aa).

Glutathione is bound at residue 21 to 22 (QS).

It belongs to the GST superfamily. Alpha family. As to quaternary structure, homodimer. Post-translationally, the N-terminus is blocked.

The protein localises to the cytoplasm. It carries out the reaction RX + glutathione = an S-substituted glutathione + a halide anion + H(+). Conjugation of reduced glutathione to a wide number of exogenous and endogenous hydrophobic electrophiles. The polypeptide is Glutathione S-transferase 8.2 (Dicentrarchus labrax (European seabass)).